The sequence spans 256 residues: MTRQAIVAANWKMNGDSALVDTMVSGLADIELSSHVDVVICPSFPYLSELNQKIKAANLNEAIHVGSQNVSEHESGAYTGEVSTAMLQNLAINYVIVGHSERRSIFKETSTQVAKKVHAALNAGLTPILCIGESEAERATGETETVLSAQIQPVIDEIGIEKFKDVVIAYEPVWAIGTGKTASSAMAQETHQFIRKFLAQQNEQVADKVPLLYGGSVNAANCEELFAQTDIDGGLIGGASLKAEQFKIICSAAKGK.

Substrate is bound at residue asparagine 10–lysine 12. Histidine 99 acts as the Electrophile in catalysis. Glutamate 171 serves as the catalytic Proton acceptor. Substrate is bound by residues glycine 177, serine 216, and glycine 237 to glycine 238.

It belongs to the triosephosphate isomerase family. In terms of assembly, homodimer.

The protein localises to the cytoplasm. The catalysed reaction is D-glyceraldehyde 3-phosphate = dihydroxyacetone phosphate. Its pathway is carbohydrate biosynthesis; gluconeogenesis. It participates in carbohydrate degradation; glycolysis; D-glyceraldehyde 3-phosphate from glycerone phosphate: step 1/1. Functionally, involved in the gluconeogenesis. Catalyzes stereospecifically the conversion of dihydroxyacetone phosphate (DHAP) to D-glyceraldehyde-3-phosphate (G3P). In Colwellia psychrerythraea (strain 34H / ATCC BAA-681) (Vibrio psychroerythus), this protein is Triosephosphate isomerase.